Here is a 650-residue protein sequence, read N- to C-terminus: Acetyl-coenzyme A synthetase (650 aa).

CoA-binding positions include 191–194 (RGGR), T311, and N335. ATP contacts are provided by residues 387–389 (GEP), 411–416 (DTWWQT), D501, and R516. S524 contributes to the CoA binding site. Position 527 (R527) interacts with ATP. Mg(2+) is bound by residues V538, H540, and I543. R585 contacts CoA. K610 carries the N6-acetyllysine modification.

The protein belongs to the ATP-dependent AMP-binding enzyme family. Mg(2+) is required as a cofactor. Acetylated. Deacetylation by the SIR2-homolog deacetylase activates the enzyme.

The enzyme catalyses acetate + ATP + CoA = acetyl-CoA + AMP + diphosphate. Functionally, catalyzes the conversion of acetate into acetyl-CoA (AcCoA), an essential intermediate at the junction of anabolic and catabolic pathways. AcsA undergoes a two-step reaction. In the first half reaction, AcsA combines acetate with ATP to form acetyl-adenylate (AcAMP) intermediate. In the second half reaction, it can then transfer the acetyl group from AcAMP to the sulfhydryl group of CoA, forming the product AcCoA. The polypeptide is Acetyl-coenzyme A synthetase (Vibrio parahaemolyticus serotype O3:K6 (strain RIMD 2210633)).